Here is a 192-residue protein sequence, read N- to C-terminus: Xanthine phosphoribosyltransferase (192 aa).

Positions 20 and 27 each coordinate xanthine. Ala-128 to Ala-132 provides a ligand contact to 5-phospho-alpha-D-ribose 1-diphosphate. Lys-156 contacts xanthine.

Belongs to the purine/pyrimidine phosphoribosyltransferase family. Xpt subfamily. Homodimer.

It is found in the cytoplasm. It carries out the reaction XMP + diphosphate = xanthine + 5-phospho-alpha-D-ribose 1-diphosphate. The protein operates within purine metabolism; XMP biosynthesis via salvage pathway; XMP from xanthine: step 1/1. Its function is as follows. Converts the preformed base xanthine, a product of nucleic acid breakdown, to xanthosine 5'-monophosphate (XMP), so it can be reused for RNA or DNA synthesis. The protein is Xanthine phosphoribosyltransferase of Lactobacillus acidophilus (strain ATCC 700396 / NCK56 / N2 / NCFM).